The primary structure comprises 220 residues: MKLNKYIDHTILKPETTQEQVEKILAEAKEYDFASVCVNPTWVALAAESLKDSDVKVCTVIGFPLGANTPAVKAFETKDAISNGADEIDVVINIGALKTGNYDLVLEDIKAVVAASGDKLVKVIIEACLLTDDEKVKGCQLSQEAGADYVKTSTGFSTGGATVADVALMRKTVGPDMGVKASGGARSYEDAIAFIEAGASRIGASSGVAIMNGAQADGDY.

The Proton donor/acceptor role is filled by D89. The active-site Schiff-base intermediate with acetaldehyde is K151. The Proton donor/acceptor role is filled by K180.

The protein belongs to the DeoC/FbaB aldolase family. DeoC type 1 subfamily.

The protein localises to the cytoplasm. It carries out the reaction 2-deoxy-D-ribose 5-phosphate = D-glyceraldehyde 3-phosphate + acetaldehyde. It functions in the pathway carbohydrate degradation; 2-deoxy-D-ribose 1-phosphate degradation; D-glyceraldehyde 3-phosphate and acetaldehyde from 2-deoxy-alpha-D-ribose 1-phosphate: step 2/2. Catalyzes a reversible aldol reaction between acetaldehyde and D-glyceraldehyde 3-phosphate to generate 2-deoxy-D-ribose 5-phosphate. The polypeptide is Deoxyribose-phosphate aldolase (Streptococcus suis (strain 05ZYH33)).